The chain runs to 271 residues: Glutamate racemase (271 aa).

Residues 13 to 14 (DS) and 45 to 46 (YG) each bind substrate. Cysteine 77 acts as the Proton donor/acceptor in catalysis. A substrate-binding site is contributed by 78–79 (NT). The Proton donor/acceptor role is filled by cysteine 192. 193–194 (TH) lines the substrate pocket.

Belongs to the aspartate/glutamate racemases family.

The catalysed reaction is L-glutamate = D-glutamate. It participates in cell wall biogenesis; peptidoglycan biosynthesis. In terms of biological role, provides the (R)-glutamate required for cell wall biosynthesis. The polypeptide is Glutamate racemase (Sinorhizobium medicae (strain WSM419) (Ensifer medicae)).